A 331-amino-acid polypeptide reads, in one-letter code: Ketol-acid reductoisomerase (NADP(+)) (331 aa).

The KARI N-terminal Rossmann domain maps to 2 to 182 (AQLFYDSDAD…GGTRAGILET (181 aa)). NADP(+) is bound by residues 25 to 28 (YGSQ), S51, S53, and 83 to 86 (DEFQ). The active site involves H108. Residue G134 coordinates NADP(+). Residues 183–328 (NFKEETETDL…KGLRAMFSWL (146 aa)) form the KARI C-terminal knotted domain. Residues D191, E195, E227, and E231 each coordinate Mg(2+). S252 is a substrate binding site.

This sequence belongs to the ketol-acid reductoisomerase family. Mg(2+) serves as cofactor.

The catalysed reaction is (2R)-2,3-dihydroxy-3-methylbutanoate + NADP(+) = (2S)-2-acetolactate + NADPH + H(+). It carries out the reaction (2R,3R)-2,3-dihydroxy-3-methylpentanoate + NADP(+) = (S)-2-ethyl-2-hydroxy-3-oxobutanoate + NADPH + H(+). It participates in amino-acid biosynthesis; L-isoleucine biosynthesis; L-isoleucine from 2-oxobutanoate: step 2/4. The protein operates within amino-acid biosynthesis; L-valine biosynthesis; L-valine from pyruvate: step 2/4. Functionally, involved in the biosynthesis of branched-chain amino acids (BCAA). Catalyzes an alkyl-migration followed by a ketol-acid reduction of (S)-2-acetolactate (S2AL) to yield (R)-2,3-dihydroxy-isovalerate. In the isomerase reaction, S2AL is rearranged via a Mg-dependent methyl migration to produce 3-hydroxy-3-methyl-2-ketobutyrate (HMKB). In the reductase reaction, this 2-ketoacid undergoes a metal-dependent reduction by NADPH to yield (R)-2,3-dihydroxy-isovalerate. This is Ketol-acid reductoisomerase (NADP(+)) from Prochlorococcus marinus (strain MIT 9211).